The sequence spans 493 residues: Glutamyl-tRNA(Gln) amidotransferase subunit A (493 aa).

Catalysis depends on charge relay system residues lysine 78 and serine 158. The active-site Acyl-ester intermediate is serine 182.

It belongs to the amidase family. GatA subfamily. Heterotrimer of A, B and C subunits.

The catalysed reaction is L-glutamyl-tRNA(Gln) + L-glutamine + ATP + H2O = L-glutaminyl-tRNA(Gln) + L-glutamate + ADP + phosphate + H(+). Its function is as follows. Allows the formation of correctly charged Gln-tRNA(Gln) through the transamidation of misacylated Glu-tRNA(Gln) in organisms which lack glutaminyl-tRNA synthetase. The reaction takes place in the presence of glutamine and ATP through an activated gamma-phospho-Glu-tRNA(Gln). In Beijerinckia indica subsp. indica (strain ATCC 9039 / DSM 1715 / NCIMB 8712), this protein is Glutamyl-tRNA(Gln) amidotransferase subunit A.